A 538-amino-acid polypeptide reads, in one-letter code: Transmembrane protein 266 (538 aa).

At 1 to 102 (MALVTSFNMA…VFLLSASLNS (102 aa)) the chain is on the cytoplasmic side. A helical membrane pass occupies residues 103–123 (FLVACVILVVILLTLELLIDT). Over 124 to 130 (KLLQFSN) the chain is Extracellular. A helical transmembrane segment spans residues 131–151 (AFQFAGVIHWISLVILSVFFS). The Cytoplasmic portion of the chain corresponds to 152 to 169 (ETVLRIVVLGIWDYIENK). The chain crosses the membrane as a helical span at residues 170 to 190 (IEVFDGAVIILSLAPMVASTV). The Extracellular portion of the chain corresponds to 191 to 199 (ANGPRSPWD). A helical membrane pass occupies residues 200 to 220 (AISLIIMFRIWRVKRVIDAYV). At 221–538 (LPVKLEMEMV…EPKLHTVPEA (318 aa)) the chain is on the cytoplasmic side. Residues 232–278 (QQYEKAKAIQDEQLERLTQICQEQGFEIRQLRAHLAQQDLDLAAERE) adopt a coiled-coil conformation. Disordered regions lie at residues 380–435 (NSTC…PLPL) and 453–483 (SSLSKDPCPSHKALDPAPLAQPTPLGSVQTS). Positions 381 to 396 (STCASATSETTSHSTC) are enriched in low complexity. Residues 397-417 (GSVTRAQSASSQTLGSSTDCS) show a composition bias toward polar residues. Over residues 425-434 (PSKPRSSPLP) the composition is skewed to low complexity.

In terms of assembly, homodimer; disulfide-linked. In terms of tissue distribution, in brain, present in the granule layer of the cerebellar cortex. Localizes on the post-synaptic side of glutamatergic mossy fibers and granule cells in the cerebellum (at protein level). As to expression, predominantly expressed in granule cells in cerebellum (at protein level).

The protein localises to the cell projection. The protein resides in the dendrite. It is found in the perikaryon. Its subcellular location is the cell membrane. In terms of biological role, voltage-sensor protein present on the post-synaptic side of glutamatergic mossy fibers and granule cells in the cerebellum. Despite the presence of a voltage-sensor segment, does not form a functional ion channel and its precise role remains unclear. Undergoes both rapid and slow structural rearrangements in response to changes in voltage. Contains a zinc-binding site that can regulate the slow conformational transition. The sequence is that of Transmembrane protein 266 from Mus musculus (Mouse).